The chain runs to 239 residues: Protein GrpE (239 aa).

Disordered regions lie at residues 1-54 (MIEN…ELKN) and 208-239 (SMGP…SEDV). A compositionally biased stretch (polar residues) spans 19–42 (QDNALENVSSAQELTTENNELSSQ). Basic and acidic residues predominate over residues 43–53 (KTEEINTEELK). A compositionally biased stretch (acidic residues) spans 228-239 (DIDSEENTSEDV).

This sequence belongs to the GrpE family. Homodimer.

It localises to the cytoplasm. In terms of biological role, participates actively in the response to hyperosmotic and heat shock by preventing the aggregation of stress-denatured proteins, in association with DnaK and GrpE. It is the nucleotide exchange factor for DnaK and may function as a thermosensor. Unfolded proteins bind initially to DnaJ; upon interaction with the DnaJ-bound protein, DnaK hydrolyzes its bound ATP, resulting in the formation of a stable complex. GrpE releases ADP from DnaK; ATP binding to DnaK triggers the release of the substrate protein, thus completing the reaction cycle. Several rounds of ATP-dependent interactions between DnaJ, DnaK and GrpE are required for fully efficient folding. In Prochlorococcus marinus (strain AS9601), this protein is Protein GrpE.